A 304-amino-acid chain; its full sequence is Ribonuclease Z (304 aa).

Residues His63, His65, Asp67, His68, His143, Asp213, and His271 each contribute to the Zn(2+) site. Asp67 functions as the Proton acceptor in the catalytic mechanism.

It belongs to the RNase Z family. Homodimer. It depends on Zn(2+) as a cofactor.

It carries out the reaction Endonucleolytic cleavage of RNA, removing extra 3' nucleotides from tRNA precursor, generating 3' termini of tRNAs. A 3'-hydroxy group is left at the tRNA terminus and a 5'-phosphoryl group is left at the trailer molecule.. In terms of biological role, zinc phosphodiesterase, which displays some tRNA 3'-processing endonuclease activity. Probably involved in tRNA maturation, by removing a 3'-trailer from precursor tRNA. This is Ribonuclease Z from Porphyromonas gingivalis (strain ATCC 33277 / DSM 20709 / CIP 103683 / JCM 12257 / NCTC 11834 / 2561).